The chain runs to 878 residues: Phosphoenolpyruvate carboxylase (878 aa).

Residues His-137 and Lys-545 contribute to the active site.

Belongs to the PEPCase type 1 family. The cofactor is Mg(2+).

It catalyses the reaction oxaloacetate + phosphate = phosphoenolpyruvate + hydrogencarbonate. Its function is as follows. Forms oxaloacetate, a four-carbon dicarboxylic acid source for the tricarboxylic acid cycle. The sequence is that of Phosphoenolpyruvate carboxylase from Photorhabdus laumondii subsp. laumondii (strain DSM 15139 / CIP 105565 / TT01) (Photorhabdus luminescens subsp. laumondii).